The sequence spans 302 residues: Oxygen-dependent coproporphyrinogen-III oxidase (302 aa).

Ser94 provides a ligand contact to substrate. 2 residues coordinate a divalent metal cation: His98 and His108. The active-site Proton donor is the His108. Residue 110–112 (NVR) coordinates substrate. Positions 147 and 177 each coordinate a divalent metal cation. The segment at 242–277 (YVEFNLVYDRGTLFGLQTGGRTESILMSMPPLARWE) is important for dimerization. Residue 260 to 262 (GGR) coordinates substrate.

This sequence belongs to the aerobic coproporphyrinogen-III oxidase family. In terms of assembly, homodimer. Requires a divalent metal cation as cofactor.

It localises to the cytoplasm. It catalyses the reaction coproporphyrinogen III + O2 + 2 H(+) = protoporphyrinogen IX + 2 CO2 + 2 H2O. It functions in the pathway porphyrin-containing compound metabolism; protoporphyrin-IX biosynthesis; protoporphyrinogen-IX from coproporphyrinogen-III (O2 route): step 1/1. Involved in the heme biosynthesis. Catalyzes the aerobic oxidative decarboxylation of propionate groups of rings A and B of coproporphyrinogen-III to yield the vinyl groups in protoporphyrinogen-IX. The polypeptide is Oxygen-dependent coproporphyrinogen-III oxidase (Aeromonas salmonicida (strain A449)).